The sequence spans 408 residues: Putative transporter AmpG 2 (408 aa).

12 consecutive transmembrane segments (helical) span residues 11–31 (IFNI…YLLT), 49–69 (IGLF…GPLL), 84–104 (YCLV…TSFN), 110–130 (TPFV…DMLI), 154–174 (FRIG…IISW), 177–197 (VYRT…FYPL), 224–244 (WIVI…LSIM), 261–281 (IGYK…GGFL), 294–311 (VLIY…LYFL), 315–337 (IISL…SPFF), 353–373 (IALI…ISGY), and 382–402 (YFFI…LYLP).

This sequence belongs to the major facilitator superfamily.

The protein resides in the cell inner membrane. The polypeptide is Putative transporter AmpG 2 (ampG2) (Rickettsia typhi (strain ATCC VR-144 / Wilmington)).